Reading from the N-terminus, the 323-residue chain is MAETTWNRHHVLSLADFSADELNIVLQTANSFKDVLYRKTKKVPTLQARLVTNLFFEPSTRTRSSFELAAKRLSADVLNFSPGTSSLSKGETILDTAKTFLAMGADMMVIRHQHSGVPQMIAQAMDDLGEQVGVLNAGDGFHEHPSQGLLDLFTLCTTLDPDQPTTHLLTGKKIAIVGDILHSRVARSNLSSLVTCGADVHLAGPPTLLPKEFADYGAQVHWSLEPALEQADFVMTLRLQHERMSQHLIPSIREYHQQFGITRDRIQRCQPQVKVLHPGPVNRGVEISSDLMDDESLSLIPHQVTSGIAVRMALLYLISNRSR.

Residues Arg61 and Thr62 each coordinate carbamoyl phosphate. Residue Lys89 coordinates L-aspartate. Carbamoyl phosphate is bound by residues Arg111, His144, and Gln147. Arg184 and Arg238 together coordinate L-aspartate. 2 residues coordinate carbamoyl phosphate: Gly279 and Pro280.

It belongs to the aspartate/ornithine carbamoyltransferase superfamily. ATCase family. As to quaternary structure, heterododecamer (2C3:3R2) of six catalytic PyrB chains organized as two trimers (C3), and six regulatory PyrI chains organized as three dimers (R2).

The catalysed reaction is carbamoyl phosphate + L-aspartate = N-carbamoyl-L-aspartate + phosphate + H(+). It participates in pyrimidine metabolism; UMP biosynthesis via de novo pathway; (S)-dihydroorotate from bicarbonate: step 2/3. Catalyzes the condensation of carbamoyl phosphate and aspartate to form carbamoyl aspartate and inorganic phosphate, the committed step in the de novo pyrimidine nucleotide biosynthesis pathway. The sequence is that of Aspartate carbamoyltransferase catalytic subunit from Acaryochloris marina (strain MBIC 11017).